We begin with the raw amino-acid sequence, 469 residues long: Fe(3+)-Zn(2+) purple acid phosphatase 12 (469 aa).

Residues 1-28 form the signal peptide; it reads MSSRSDLKIKRVSLIIFLLSVLVEFCYG. Asparagine 114 is a glycosylation site (N-linked (GlcNAc...) asparagine). Residue aspartate 168 coordinates Fe cation. Asparagine 176 carries an N-linked (GlcNAc...) asparagine glycan. Fe cation contacts are provided by aspartate 197 and tyrosine 200. Zn(2+) is bound at residue aspartate 197. Asparagine 234 lines the Zn(2+) pocket. Asparagine 234 provides a ligand contact to substrate. An N-linked (GlcNAc...) asparagine glycan is attached at asparagine 307. Histidine 319 serves as a coordination point for Zn(2+). The Proton donor role is filled by histidine 329. Histidine 356 is a Zn(2+) binding site. 356 to 358 contributes to the substrate binding site; it reads HVH. Residue histidine 358 coordinates Fe cation. The N-linked (GlcNAc...) asparagine glycan is linked to asparagine 429.

The protein belongs to the metallophosphoesterase superfamily. Purple acid phosphatase family. In terms of assembly, homodimer; disulfide-linked. The cofactor is Fe cation. It depends on Zn(2+) as a cofactor. In terms of tissue distribution, expressed in roots, stems, leaves, flowers and siliques.

It localises to the secreted. It carries out the reaction a phosphate monoester + H2O = an alcohol + phosphate. The polypeptide is Fe(3+)-Zn(2+) purple acid phosphatase 12 (PAP12) (Arabidopsis thaliana (Mouse-ear cress)).